Here is a 149-residue protein sequence, read N- to C-terminus: Large ribosomal subunit protein bL9 (149 aa).

It belongs to the bacterial ribosomal protein bL9 family.

In terms of biological role, binds to the 23S rRNA. This chain is Large ribosomal subunit protein bL9, found in Teredinibacter turnerae (strain ATCC 39867 / T7901).